Consider the following 141-residue polypeptide: MTQVLRAALTDQPIFLAEHEELVSHRSAGAIVGFVGMIRDRDGGRGVLRLEYSAHPSAAQVLADLVAEVAEESSGVRAVAASHRIGVLQVGEAALVAAVAADHRRAAFGTCAHLVETIKARLPVWKHQFFEDGTDEWVGSV.

Residues 37–39 (MIR), 103–104 (HR), Lys-119, and 126–128 (KHQ) contribute to the substrate site.

This sequence belongs to the MoaE family. Heterotetramer of 2 MoaD subunits and 2 MoaE subunits. Also stable as homodimer. The enzyme changes between these two forms during catalysis.

The enzyme catalyses 2 [molybdopterin-synthase sulfur-carrier protein]-C-terminal-Gly-aminoethanethioate + cyclic pyranopterin phosphate + H2O = molybdopterin + 2 [molybdopterin-synthase sulfur-carrier protein]-C-terminal Gly-Gly + 2 H(+). The protein operates within cofactor biosynthesis; molybdopterin biosynthesis. Its function is as follows. Converts molybdopterin precursor Z into molybdopterin. This requires the incorporation of two sulfur atoms into precursor Z to generate a dithiolene group. The sulfur is provided by MoaD. This Mycobacterium tuberculosis (strain CDC 1551 / Oshkosh) protein is Molybdopterin synthase catalytic subunit 2 (moaE2).